An 81-amino-acid chain; its full sequence is Photosystem I iron-sulfur center (81 aa).

2 consecutive 4Fe-4S ferredoxin-type domains span residues 2–31 (SHSV…MIPW) and 39–68 (IASA…VRVY). [4Fe-4S] cluster is bound by residues Cys-11, Cys-14, Cys-17, Cys-21, Cys-48, Cys-51, Cys-54, and Cys-58.

The eukaryotic PSI reaction center is composed of at least 11 subunits. The cofactor is [4Fe-4S] cluster.

It is found in the plastid thylakoid membrane. The enzyme catalyses reduced [plastocyanin] + hnu + oxidized [2Fe-2S]-[ferredoxin] = oxidized [plastocyanin] + reduced [2Fe-2S]-[ferredoxin]. In terms of biological role, apoprotein for the two 4Fe-4S centers FA and FB of photosystem I (PSI); essential for photochemical activity. FB is the terminal electron acceptor of PSI, donating electrons to ferredoxin. The C-terminus interacts with PsaA/B/D and helps assemble the protein into the PSI complex. Required for binding of PsaD and PsaE to PSI. PSI is a plastocyanin-ferredoxin oxidoreductase, converting photonic excitation into a charge separation, which transfers an electron from the donor P700 chlorophyll pair to the spectroscopically characterized acceptors A0, A1, FX, FA and FB in turn. The protein is Photosystem I iron-sulfur center of Cuscuta reflexa (Southern Asian dodder).